The sequence spans 148 residues: Ubiquitin-conjugating enzyme E2 28 (148 aa).

Positions 1–147 (MASKRILKEL…ARSWTQKYAM (147 aa)) constitute a UBC core domain. The Glycyl thioester intermediate role is filled by cysteine 85.

This sequence belongs to the ubiquitin-conjugating enzyme family. As to quaternary structure, interacts with SINAT5. Expressed in seeds, pistils, siliques, hypocotyls and leaves.

It catalyses the reaction S-ubiquitinyl-[E1 ubiquitin-activating enzyme]-L-cysteine + [E2 ubiquitin-conjugating enzyme]-L-cysteine = [E1 ubiquitin-activating enzyme]-L-cysteine + S-ubiquitinyl-[E2 ubiquitin-conjugating enzyme]-L-cysteine.. It functions in the pathway protein modification; protein ubiquitination. Functionally, accepts the ubiquitin from the E1 complex and catalyzes its covalent attachment to other proteins. This is Ubiquitin-conjugating enzyme E2 28 from Arabidopsis thaliana (Mouse-ear cress).